We begin with the raw amino-acid sequence, 606 residues long: Chaperone protein DnaK (606 aa).

T174 bears the Phosphothreonine; by autocatalysis mark. Residues 579-593 (ASAAGNPGQGQTNEN) are compositionally biased toward polar residues. The disordered stretch occupies residues 579 to 606 (ASAAGNPGQGQTNENPGGKTIDGDYKVN).

It belongs to the heat shock protein 70 family.

Acts as a chaperone. This Dictyoglomus thermophilum (strain ATCC 35947 / DSM 3960 / H-6-12) protein is Chaperone protein DnaK.